The primary structure comprises 733 residues: Neutral ceramidase 3 (733 aa).

The N-terminal stretch at 1–25 is a signal peptide; the sequence is MTRWSMSMHCTLFLLFLLRLTCIFS. The active-site Nucleophile is the Ser-307. Residue Asn-325 is glycosylated (N-linked (GlcNAc...) asparagine).

It belongs to the neutral ceramidase family.

The protein localises to the secreted. The protein resides in the endoplasmic reticulum. It localises to the golgi apparatus. It carries out the reaction an N-acylsphing-4-enine + H2O = sphing-4-enine + a fatty acid. In terms of biological role, hydrolyzes the sphingolipid ceramide into sphingosine and free fatty acid. Promotes oxidative stress resistance. The polypeptide is Neutral ceramidase 3 (Arabidopsis thaliana (Mouse-ear cress)).